A 180-amino-acid chain; its full sequence is MSESELKLVARRIRSFPDFPIPGVLFRDISPLLKDPDSFRASIRLLASHLKSTHSGKIDYIAGLDSRGFLFGPSLAQELGVGCVLIRKQGKLPGPTISASYALEYGKAELEIQKDALEPGQRVVIVDDLLATGGTMFAACDLLHQLRAEVVECVSLVELTSLKGRERLGPIPFFSLLQYD.

Ser-2 is modified (N-acetylserine). A phosphoserine mark is found at Ser-4, Ser-15, and Ser-30. Phosphotyrosine is present on Tyr-60. The residue at position 66 (Ser-66) is a Phosphoserine. Residue Lys-114 is modified to N6-acetyllysine. Thr-135 is subject to Phosphothreonine.

This sequence belongs to the purine/pyrimidine phosphoribosyltransferase family. As to quaternary structure, homodimer.

It is found in the cytoplasm. It catalyses the reaction AMP + diphosphate = 5-phospho-alpha-D-ribose 1-diphosphate + adenine. Its pathway is purine metabolism; AMP biosynthesis via salvage pathway; AMP from adenine: step 1/1. Its function is as follows. Catalyzes a salvage reaction resulting in the formation of AMP, that is energically less costly than de novo synthesis. In Mus pahari (Gairdner's shrew-mouse), this protein is Adenine phosphoribosyltransferase.